Reading from the N-terminus, the 135-residue chain is Nucleoside diphosphate kinase (135 aa).

Positions 11, 59, 87, 93, 104, and 114 each coordinate ATP. Histidine 117 acts as the Pros-phosphohistidine intermediate in catalysis.

It belongs to the NDK family. As to quaternary structure, homotetramer. Requires Mg(2+) as cofactor.

Its subcellular location is the cytoplasm. The catalysed reaction is a 2'-deoxyribonucleoside 5'-diphosphate + ATP = a 2'-deoxyribonucleoside 5'-triphosphate + ADP. It catalyses the reaction a ribonucleoside 5'-diphosphate + ATP = a ribonucleoside 5'-triphosphate + ADP. In terms of biological role, major role in the synthesis of nucleoside triphosphates other than ATP. The ATP gamma phosphate is transferred to the NDP beta phosphate via a ping-pong mechanism, using a phosphorylated active-site intermediate. This chain is Nucleoside diphosphate kinase, found in Marinomonas sp. (strain MWYL1).